We begin with the raw amino-acid sequence, 177 residues long: SsrA-binding protein (177 aa).

2 disordered regions span residues 1-23 (MYVP…KDGK) and 148-177 (YDKR…QRGE). Residues 148–165 (YDKRQTLREKQDRRESDR) show a composition bias toward basic and acidic residues.

Belongs to the SmpB family.

It localises to the cytoplasm. Its function is as follows. Required for rescue of stalled ribosomes mediated by trans-translation. Binds to transfer-messenger RNA (tmRNA), required for stable association of tmRNA with ribosomes. tmRNA and SmpB together mimic tRNA shape, replacing the anticodon stem-loop with SmpB. tmRNA is encoded by the ssrA gene; the 2 termini fold to resemble tRNA(Ala) and it encodes a 'tag peptide', a short internal open reading frame. During trans-translation Ala-aminoacylated tmRNA acts like a tRNA, entering the A-site of stalled ribosomes, displacing the stalled mRNA. The ribosome then switches to translate the ORF on the tmRNA; the nascent peptide is terminated with the 'tag peptide' encoded by the tmRNA and targeted for degradation. The ribosome is freed to recommence translation, which seems to be the essential function of trans-translation. This Streptomyces avermitilis (strain ATCC 31267 / DSM 46492 / JCM 5070 / NBRC 14893 / NCIMB 12804 / NRRL 8165 / MA-4680) protein is SsrA-binding protein.